Consider the following 83-residue polypeptide: Male-specific opa-containing protein (83 aa).

An N-terminal signal peptide occupies residues 1–18 (MNFIQIAVLFVLVAVALA). The disordered stretch occupies residues 23–83 (DPANLPAPEA…NVNHNVITIG (61 aa)). A compositionally biased stretch (low complexity) spans 28 to 49 (PAPEAAAAPPAAAAAPPAAAAA). A compositionally biased stretch (pro residues) spans 50–59 (PPAPPAPPAA).

In terms of tissue distribution, adult male abdomen.

Functionally, may be a male specific regulatory factor. The protein is Male-specific opa-containing protein (msopa) of Drosophila melanogaster (Fruit fly).